The primary structure comprises 758 residues: MTVSNDTVDNAKATPELDQPWEELGLKQDEYDKIVGILGRRPTDAELTVYSVMWSEHCSYKSSKTHLRYFGETTTEEMASKILAGIGENAGVVDIGDGDAVTFRVESHNHPSFVEPYQGAATGVGGIVRDIMAMGARPIAVMDQLRFGPADAPDTARVLPGVVSGIGGYGNSLGLPNIGGETVFDESYAGNPLVNALCVGTLRVEDLKLAFASGTGNKVMLFGSRTGLDGIGGVSVLGSASFEEGEERKLPAVQVGDPFAEKVLIECCLELYAAGVVVGIQDLGGGGLACATSELAAAGDGGMVVNLDNVPLRAENMSAAEILASESQERMCAVVSPDNVEKFREICEKWDVTCAEIGEVTDKKDTYLVYHNGELVVDAPPSTIDEGPVYERPYARPQWQDEIQQAPEIARPESLVQAFKDMVSSPALSSRAFITEQYDRYVRGNTVKAKQSDSGVLRINEETSRGVAISADGSGRYTKLDPNMGARLALAEAYRNVAVTGARPYAVTNCLNFGSPENTDVMWQFREAVHGLADGSKELNIPVSGGNVSFYNQTGDEPILPTPVVGVLGVIDDVHKALAHDLGGIDEPETLILLGETKEEFGGSIWQQVSGGGLQGLPPQVDLANEAKLADFFVGNTSVAASHDLSEGGLAIAAFEMAQKNNVGVDLDLSVVHEDALTALFSESASRVLISTASDHLDGILQRASELGIPAVVVGTTNDSGNITFAGEEVATAELREAWSATLPNLFGHAVGANSVVE.

Histidine 57 is an active-site residue. ATP-binding residues include tyrosine 60 and arginine 104. Glutamate 106 lines the Mg(2+) pocket. Substrate contacts are provided by residues 107–110 and arginine 129; that span reads SHNH. Histidine 108 (proton acceptor) is an active-site residue. Mg(2+) is bound at residue aspartate 130. Residue glutamine 254 participates in substrate binding. A Mg(2+)-binding site is contributed by aspartate 282. Position 326-328 (326-328) interacts with substrate; the sequence is ESQ. ATP contacts are provided by asparagine 509 and glycine 546. Asparagine 547 contacts Mg(2+). Position 549 (serine 549) interacts with substrate.

Belongs to the FGAMS family. Monomer. Part of the FGAM synthase complex composed of 1 PurL, 1 PurQ and 2 PurS subunits.

Its subcellular location is the cytoplasm. It carries out the reaction N(2)-formyl-N(1)-(5-phospho-beta-D-ribosyl)glycinamide + L-glutamine + ATP + H2O = 2-formamido-N(1)-(5-O-phospho-beta-D-ribosyl)acetamidine + L-glutamate + ADP + phosphate + H(+). Its pathway is purine metabolism; IMP biosynthesis via de novo pathway; 5-amino-1-(5-phospho-D-ribosyl)imidazole from N(2)-formyl-N(1)-(5-phospho-D-ribosyl)glycinamide: step 1/2. Part of the phosphoribosylformylglycinamidine synthase complex involved in the purines biosynthetic pathway. Catalyzes the ATP-dependent conversion of formylglycinamide ribonucleotide (FGAR) and glutamine to yield formylglycinamidine ribonucleotide (FGAM) and glutamate. The FGAM synthase complex is composed of three subunits. PurQ produces an ammonia molecule by converting glutamine to glutamate. PurL transfers the ammonia molecule to FGAR to form FGAM in an ATP-dependent manner. PurS interacts with PurQ and PurL and is thought to assist in the transfer of the ammonia molecule from PurQ to PurL. In Corynebacterium ammoniagenes (Brevibacterium ammoniagenes), this protein is Phosphoribosylformylglycinamidine synthase subunit PurL.